A 325-amino-acid polypeptide reads, in one-letter code: 5-dehydro-2-deoxygluconokinase (325 aa).

This sequence belongs to the carbohydrate kinase PfkB family.

The catalysed reaction is 5-dehydro-2-deoxy-D-gluconate + ATP = 6-phospho-5-dehydro-2-deoxy-D-gluconate + ADP + H(+). It functions in the pathway polyol metabolism; myo-inositol degradation into acetyl-CoA; acetyl-CoA from myo-inositol: step 5/7. Catalyzes the phosphorylation of 5-dehydro-2-deoxy-D-gluconate (2-deoxy-5-keto-D-gluconate or DKG) to 6-phospho-5-dehydro-2-deoxy-D-gluconate (DKGP). The protein is 5-dehydro-2-deoxygluconokinase of Bacillus licheniformis (strain ATCC 14580 / DSM 13 / JCM 2505 / CCUG 7422 / NBRC 12200 / NCIMB 9375 / NCTC 10341 / NRRL NRS-1264 / Gibson 46).